The chain runs to 26 residues: Melittin (26 aa).

Position 1 is an N-formylglycine; partial (glycine 1). Glutamic acid 1-amide is present on glutamate 26.

The protein belongs to the melittin family. Monomer (in solution and for integration into membranes), homotetramer (in solution and potentially as a toroidal pore in membranes), and potenially homomultimer (as a toroidal pore in membranes). Expressed by the venom gland.

It localises to the secreted. Its subcellular location is the target cell membrane. Functionally, main toxin of bee venom with strong hemolytic activity and antimicrobial activity. It has enhancing effects on bee venom phospholipase A2 activity. This amphipathic toxin binds to negatively charged membrane surface and forms pore by inserting into lipid bilayers inducing the leakage of ions and molecules and the enhancement of permeability that ultimately leads to cell lysis. It acts as a voltage-gated pore with higher selectivity for anions over cations. The ion conductance has been shown to be voltage-dependent. Self-association of melittin in membranes is promoted by high ionic strength, but not by the presence of negatively charged lipids. In vivo, intradermal injection into healthy human volunteers produce sharp pain sensation and an inflammatory response. It produces pain by activating primary nociceptor cells directly and indirectly due to its ability to activate plasma membrane phospholipase A2 and its pore-forming activity. This is Melittin (MELT) from Apis dorsata (Giant honeybee).